Here is a 178-residue protein sequence, read N- to C-terminus: Probable apo-citrate lyase phosphoribosyl-dephospho-CoA transferase (178 aa).

The protein belongs to the CitX family.

It catalyses the reaction apo-[citrate lyase ACP] + 2'-(5''-triphospho-alpha-D-ribosyl)-3'-dephospho-CoA = holo-[citrate lyase ACP] + diphosphate. Its function is as follows. Transfers 2-(5''-triphosphoribosyl)-3'-dephosphocoenzyme-A on a serine residue to the apo-acyl carrier protein (gamma chain) of the citrate lyase to yield holo-acyl carrier protein. The sequence is that of Probable apo-citrate lyase phosphoribosyl-dephospho-CoA transferase from Vibrio cholerae serotype O1 (strain ATCC 39541 / Classical Ogawa 395 / O395).